The chain runs to 352 residues: C-C chemokine receptor type 5 (352 aa).

The Extracellular portion of the chain corresponds to 1–30 (MDYQVSSPTYDIDYYTSEPCQKVNVKQIAA). Residue Y3 is modified to Sulfotyrosine. 2 O-linked (GalNAc...) serine glycosylation sites follow: S6 and S7. 3 positions are modified to sulfotyrosine: Y10, Y14, and Y15. Disulfide bonds link C20-C269 and C101-C178. The helical transmembrane segment at 31–58 (RLLPPLYSLVFIFGFVGNILVVLILINC) threads the bilayer. Residues 59–68 (KRLKSMTDIY) lie on the Cytoplasmic side of the membrane. The chain crosses the membrane as a helical span at residues 69–89 (LLNLAISDLFFLLTVPFWAHY). At 90-102 (AAAQWDFGNTMCQ) the chain is on the extracellular side. A helical transmembrane segment spans residues 103–124 (LLTGLYFIGFFSGIFFIILLTI). Topologically, residues 125–141 (DRYLAIVHAVFALKART) are cytoplasmic. A helical membrane pass occupies residues 142–166 (VTFGVVTSVITWVVAVFASLPGIIF). The Extracellular portion of the chain corresponds to 167 to 198 (TRSQREGLHYTCSSHFPYSQYQFWKNFQTLKI). Residues 199–218 (VILGLVLPLLVMVICYSGIL) traverse the membrane as a helical segment. The Cytoplasmic segment spans residues 219–235 (KTLLRCRNEKKRHRAVR). The chain crosses the membrane as a helical span at residues 236-260 (LIFTIMIVYFLFWAPYNIVLLLNTF). At 261–277 (QEFFGLNNCSSSNRLDQ) the chain is on the extracellular side. A helical membrane pass occupies residues 278-301 (AMQVTETLGMTHCCINPIIYAFVG). Over 302–352 (EKFRNYLLVFFQKHIAKRFCKCCSIFQQEAPERASSVYTRSTGEQETSVGL) the chain is Cytoplasmic. 3 S-palmitoyl cysteine lipidation sites follow: C321, C323, and C324. Phosphoserine; by BARK1 is present on residues S336, S337, S342, and S349.

Belongs to the G-protein coupled receptor 1 family. As to quaternary structure, interacts with PRAF2. Efficient ligand binding to CCL3/MIP-1alpha and CCL4/MIP-1beta requires sulfation, O-glycosylation and sialic acid modifications. Glycosylation on Ser-6 is required for efficient binding of CCL4. Interacts with GRK2. Interacts with ARRB1 and ARRB2. Interacts with CNIH4. Interacts with S100A4; this interaction stimulates T-lymphocyte chemotaxis. Post-translationally, sulfated on at least 2 of the N-terminal tyrosines. Sulfation is required for efficient binding of the chemokines, CCL3 and CCL4. In terms of processing, palmitoylation in the C-terminal is important for cell surface expression. Phosphorylation on serine residues in the C-terminal is stimulated by binding CC chemokines especially by APO-RANTES. Post-translationally, O-glycosylated, but not N-glycosylated. Ser-6 appears to be the major site even if Ser-7 may be also O-glycosylated. Also sialylated glycans present which contribute to chemokine binding. Thr-16 and Ser-17 may also be glycosylated and, if so, with small moieties such as a T-antigen.

The protein resides in the cell membrane. Receptor for a number of inflammatory CC-chemokines including CCL3/MIP-1-alpha, CCL4/MIP-1-beta and RANTES and subsequently transduces a signal by increasing the intracellular calcium ion level. May play a role in the control of granulocytic lineage proliferation or differentiation. Participates in T-lymphocyte migration to the infection site by acting as a chemotactic receptor. This Trachypithecus francoisi (Francois' leaf monkey) protein is C-C chemokine receptor type 5 (CCR5).